The following is a 689-amino-acid chain: uncharacterized protein (689 aa).

Low complexity-rich tracts occupy residues 347-359 and 370-388; these read RPPSGSGEAAGEP and ASTASATAATSTRGPTRPT. A disordered region spans residues 347 to 689; that stretch reads RPPSGSGEAA…KSQPPAAHTA (343 aa). The span at 405-480 shows a compositional bias: basic and acidic residues; it reads ARPESEEQTD…QESQVARRDE (76 aa). 2 stretches are compositionally biased toward pro residues: residues 515 to 539 and 550 to 569; these read VPGPDPRLWVPPPHLLFPSPLPPMT and RCPPGPAEEPPTCRPRPPRP. 2 stretches are compositionally biased toward low complexity: residues 570–581 and 591–610; these read SSDTPLSAVSRP and TARVRFFLSSSSSSPSYSPA. Residues 611-620 show a composition bias toward pro residues; sequence PLSPPSPVSP. A compositionally biased stretch (low complexity) spans 666-676; sequence SVPSSASPSAS.

This is an uncharacterized protein from Homo sapiens (Human).